The sequence spans 102 residues: Large ribosomal subunit protein bL21 (102 aa).

This sequence belongs to the bacterial ribosomal protein bL21 family. In terms of assembly, part of the 50S ribosomal subunit. Contacts protein L20.

Its function is as follows. This protein binds to 23S rRNA in the presence of protein L20. The sequence is that of Large ribosomal subunit protein bL21 from Clavibacter sepedonicus (Clavibacter michiganensis subsp. sepedonicus).